Here is a 564-residue protein sequence, read N- to C-terminus: Formate--tetrahydrofolate ligase (564 aa).

ATP is bound at residue Thr-65–Thr-72.

This sequence belongs to the formate--tetrahydrofolate ligase family.

It carries out the reaction (6S)-5,6,7,8-tetrahydrofolate + formate + ATP = (6R)-10-formyltetrahydrofolate + ADP + phosphate. It functions in the pathway one-carbon metabolism; tetrahydrofolate interconversion. The polypeptide is Formate--tetrahydrofolate ligase (Roseiflexus sp. (strain RS-1)).